Reading from the N-terminus, the 243-residue chain is UPF0246 protein M6_Spy1787 (243 aa).

The protein belongs to the UPF0246 family.

In Streptococcus pyogenes serotype M6 (strain ATCC BAA-946 / MGAS10394), this protein is UPF0246 protein M6_Spy1787.